The following is a 548-amino-acid chain: DNA ligase (548 aa).

Glu252 provides a ligand contact to ATP. The N6-AMP-lysine intermediate role is filled by Lys254. The ATP site is built by Arg259, Arg274, Glu303, Phe343, Arg414, and Lys420.

Belongs to the ATP-dependent DNA ligase family. It depends on Mg(2+) as a cofactor.

The enzyme catalyses ATP + (deoxyribonucleotide)n-3'-hydroxyl + 5'-phospho-(deoxyribonucleotide)m = (deoxyribonucleotide)n+m + AMP + diphosphate.. Its function is as follows. DNA ligase that seals nicks in double-stranded DNA during DNA replication, DNA recombination and DNA repair. The protein is DNA ligase of Natronomonas pharaonis (strain ATCC 35678 / DSM 2160 / CIP 103997 / JCM 8858 / NBRC 14720 / NCIMB 2260 / Gabara) (Halobacterium pharaonis).